A 427-amino-acid polypeptide reads, in one-letter code: 3-phosphoshikimate 1-carboxyvinyltransferase (427 aa).

Lys-22, Ser-23, and Arg-27 together coordinate 3-phosphoshikimate. Residue Lys-22 coordinates phosphoenolpyruvate. Phosphoenolpyruvate is bound by residues Gly-96 and Arg-124. The 3-phosphoshikimate site is built by Ser-169, Ser-170, Gln-171, Ser-197, Asp-313, Asn-336, and Lys-340. Gln-171 contributes to the phosphoenolpyruvate binding site. Asp-313 (proton acceptor) is an active-site residue. Phosphoenolpyruvate is bound by residues Arg-344, Arg-386, and Lys-411.

The protein belongs to the EPSP synthase family. Monomer.

It localises to the cytoplasm. It carries out the reaction 3-phosphoshikimate + phosphoenolpyruvate = 5-O-(1-carboxyvinyl)-3-phosphoshikimate + phosphate. It participates in metabolic intermediate biosynthesis; chorismate biosynthesis; chorismate from D-erythrose 4-phosphate and phosphoenolpyruvate: step 6/7. In terms of biological role, catalyzes the transfer of the enolpyruvyl moiety of phosphoenolpyruvate (PEP) to the 5-hydroxyl of shikimate-3-phosphate (S3P) to produce enolpyruvyl shikimate-3-phosphate and inorganic phosphate. This chain is 3-phosphoshikimate 1-carboxyvinyltransferase, found in Shigella sonnei.